A 776-amino-acid polypeptide reads, in one-letter code: Probable E3 ubiquitin-protein ligase HECTD2 (776 aa).

The disordered stretch occupies residues 1 to 46 (MSEAVRVPSPATPLVVAAPAPEERKGKESEREKLPPIVSAGAGATA). Residues 7–20 (VPSPATPLVVAAPA) are compositionally biased toward low complexity. Position 9 is a phosphoserine (S9). The span at 21–34 (PEERKGKESEREKL) shows a compositional bias: basic and acidic residues. The region spanning 437–776 (KRADLKKKLK…ISNSEGFGLE (340 aa)) is the HECT domain. The active-site Glycyl thioester intermediate is C744.

It catalyses the reaction S-ubiquitinyl-[E2 ubiquitin-conjugating enzyme]-L-cysteine + [acceptor protein]-L-lysine = [E2 ubiquitin-conjugating enzyme]-L-cysteine + N(6)-ubiquitinyl-[acceptor protein]-L-lysine.. It participates in protein modification; protein ubiquitination. E3 ubiquitin-protein ligase which accepts ubiquitin from an E2 ubiquitin-conjugating enzyme in the form of a thioester and then directly transfers the ubiquitin to targeted substrates. Its function is as follows. (Microbial infection) Catalyzes ubiquitination of Botulinum neurotoxin A light chain (LC) of C.botulinum neurotoxin type A (BoNT/A). The chain is Probable E3 ubiquitin-protein ligase HECTD2 from Homo sapiens (Human).